The chain runs to 484 residues: RxLR effector protein PexRD18 (484 aa).

A signal peptide spans 1 to 20 (MSHQRILLLLMAAFFAWVSA). Positions 55–79 (RFLRLYDAEVRDTVRGDNDVDREER) match the RxLR-dEER motif.

The protein belongs to the RxLR effector family.

Its subcellular location is the secreted. It is found in the host cell membrane. Functionally, effector that enhances P.infestans colonization of Nicotiana benthamiana leaves. This chain is RxLR effector protein PexRD18, found in Phytophthora infestans (strain T30-4) (Potato late blight agent).